Here is a 245-residue protein sequence, read N- to C-terminus: Short-chain dehydrogenase/reductase pyiH (245 aa).

NADP(+)-binding residues include Ile18, Arg42, Asp68, and Asn95. Catalysis depends on Ser150, which acts as the Proton donor.

This sequence belongs to the short-chain dehydrogenases/reductases (SDR) family.

It functions in the pathway mycotoxin biosynthesis. In terms of biological role, short-chain dehydrogenase/reductase; part of the gene cluster that mediates the biosynthesis of the mycotoxin pyrichalasin H, a tyrosine-derived cytochalasan that inhibits the growth of rice seedlings, but also inhibits lymphocyte capping and actin polymerization and alters cell morphology. Pyrichalasin H is indicated as the responsible agent for the genus-specific pathogenicity of M.grisea toward crabgrass. The first step in the pathway is catalyzed by the O-methyltransferase pyiA which methylates free tyrosine to generate the precursor O-methyltyrosine. The hybrid PKS-NRPS pyiS, assisted by the enoyl reductase pyiC, are responsible for fusion of the O-methyltyrosine precursor and the polyketide backbone. The polyketide synthase module (PKS) of pyiS is responsible for the synthesis of the polyketide backbone and the downstream nonribosomal peptide synthetase (NRPS) amidates the carboxyl end of the polyketide with the O-methyltyrosine precursor. As the NRPS A-domain demonstrates substrate tolerance, pyiS can also use phenylalanine, tyrosine and even para-chlorophenylalanine as amino acid precursor, which leads to the production of novel cytochalasans, including halogenated cytochalasans. Because pyiS lacks a designated enoylreductase (ER) domain, the required activity is provided the enoyl reductase pyiC. Reduction by the hydrolyase pyiE leads to 1,5-dihydropyrrolone, which is substrate for dehydration and intra-molecular Diels-Alder cyclization by the Diels-Alderase pyiF to yield the required isoindolone-fused macrocycle. The tailoring cytochrome P450 monooxygenases piyD and piyG catalyze the hydroxylation at C-18 and C-7, respectivily, whereas the short-chain dehydrogenase/reductase pyiH reduces the carbonyl at C-21 in preparation for the transfer of an acetyl group by the acetyltransferase pyiB. These 3 reactions whose order is not clear yet, lead to the production of O-methylpyrichalasin J, a deacetylated pyrichalasin H. Finally, pyiB to converts O-methylpyrichalasin J into the final product pyrichalasin H via acetylation of C-21. This chain is Short-chain dehydrogenase/reductase pyiH, found in Pyricularia grisea (Crabgrass-specific blast fungus).